We begin with the raw amino-acid sequence, 200 residues long: Holliday junction branch migration complex subunit RuvA (200 aa).

Residues 1 to 63 form a domain I region; that stretch reads MYAYIKGTLS…EDAQLLYGFI (63 aa). Positions 64–142 are domain II; the sequence is NEEEKEMFLS…ITEENSDDLL (79 aa). Residues 143–149 are flexible linker; it reads QTQVNGN. A domain III region spans residues 150 to 200; that stretch reads EQNQIISEALLALQALGYSKRELTKVEKSLNKHNVNSVDEAVKIGLQTLVS.

Belongs to the RuvA family. In terms of assembly, homotetramer. Forms an RuvA(8)-RuvB(12)-Holliday junction (HJ) complex. HJ DNA is sandwiched between 2 RuvA tetramers; dsDNA enters through RuvA and exits via RuvB. An RuvB hexamer assembles on each DNA strand where it exits the tetramer. Each RuvB hexamer is contacted by two RuvA subunits (via domain III) on 2 adjacent RuvB subunits; this complex drives branch migration. In the full resolvosome a probable DNA-RuvA(4)-RuvB(12)-RuvC(2) complex forms which resolves the HJ.

It is found in the cytoplasm. Functionally, the RuvA-RuvB-RuvC complex processes Holliday junction (HJ) DNA during genetic recombination and DNA repair, while the RuvA-RuvB complex plays an important role in the rescue of blocked DNA replication forks via replication fork reversal (RFR). RuvA specifically binds to HJ cruciform DNA, conferring on it an open structure. The RuvB hexamer acts as an ATP-dependent pump, pulling dsDNA into and through the RuvAB complex. HJ branch migration allows RuvC to scan DNA until it finds its consensus sequence, where it cleaves and resolves the cruciform DNA. This Staphylococcus epidermidis (strain ATCC 35984 / DSM 28319 / BCRC 17069 / CCUG 31568 / BM 3577 / RP62A) protein is Holliday junction branch migration complex subunit RuvA.